Here is a 287-residue protein sequence, read N- to C-terminus: 2' cyclic ADP-D-ribose synthase BtTIR (287 aa).

The region spanning 155 to 287 is the TIR domain; the sequence is KQYDFFISHA…DDIVENLKNL (133 aa). The active site involves Glu230.

In terms of assembly, homodimer.

It catalyses the reaction NAD(+) = 2'cADPR + nicotinamide + H(+). Functionally, NAD(+) hydrolase (NADase) that cleaves NAD(+) into nicotinamide and 2' cyclic ADP-D-ribose (2'cADPR). This Bacteroides thetaiotaomicron protein is 2' cyclic ADP-D-ribose synthase BtTIR.